The chain runs to 274 residues: Acetyl-coenzyme A carboxylase carboxyl transferase subunit beta (274 aa).

The CoA carboxyltransferase N-terminal domain maps to 16–274 (LWTKCEECKN…LLNLLFYKNA (259 aa)). Zn(2+) is bound by residues C20, C23, C39, and C42. The segment at 20-42 (CEECKNILLAQELETNFYVCPKC) adopts a C4-type zinc-finger fold.

Belongs to the AccD/PCCB family. Acetyl-CoA carboxylase is a heterohexamer composed of biotin carboxyl carrier protein (AccB), biotin carboxylase (AccC) and two subunits each of ACCase subunit alpha (AccA) and ACCase subunit beta (AccD). The cofactor is Zn(2+).

Its subcellular location is the cytoplasm. The catalysed reaction is N(6)-carboxybiotinyl-L-lysyl-[protein] + acetyl-CoA = N(6)-biotinyl-L-lysyl-[protein] + malonyl-CoA. It functions in the pathway lipid metabolism; malonyl-CoA biosynthesis; malonyl-CoA from acetyl-CoA: step 1/1. Component of the acetyl coenzyme A carboxylase (ACC) complex. Biotin carboxylase (BC) catalyzes the carboxylation of biotin on its carrier protein (BCCP) and then the CO(2) group is transferred by the transcarboxylase to acetyl-CoA to form malonyl-CoA. In Hydrogenobaculum sp. (strain Y04AAS1), this protein is Acetyl-coenzyme A carboxylase carboxyl transferase subunit beta.